A 330-amino-acid polypeptide reads, in one-letter code: Probable deoxyhypusine synthase (330 aa).

Positions 1-25 are disordered; that stretch reads MTGDDADETHENVVPGSDEDLDTPD. The active-site Nucleophile is the Lys-298.

This sequence belongs to the deoxyhypusine synthase family. The cofactor is NAD(+).

It carries out the reaction [eIF5A protein]-L-lysine + spermidine = [eIF5A protein]-deoxyhypusine + propane-1,3-diamine. It participates in protein modification; eIF5A hypusination. Its function is as follows. Catalyzes the NAD-dependent oxidative cleavage of spermidine and the subsequent transfer of the butylamine moiety of spermidine to the epsilon-amino group of a specific lysine residue of the eIF-5A precursor protein to form the intermediate deoxyhypusine residue. This is Probable deoxyhypusine synthase from Halobacterium salinarum (strain ATCC 29341 / DSM 671 / R1).